We begin with the raw amino-acid sequence, 206 residues long: Guanylate kinase (206 aa).

Residues 6 to 185 (GAILVLSGPS…AAKTLRIIAD (180 aa)) enclose the Guanylate kinase-like domain. ATP is bound at residue 13 to 20 (GPSGAGKS).

This sequence belongs to the guanylate kinase family.

Its subcellular location is the cytoplasm. The catalysed reaction is GMP + ATP = GDP + ADP. Essential for recycling GMP and indirectly, cGMP. This Sulfurimonas denitrificans (strain ATCC 33889 / DSM 1251) (Thiomicrospira denitrificans (strain ATCC 33889 / DSM 1251)) protein is Guanylate kinase.